The following is a 1380-amino-acid chain: DNA-directed RNA polymerase subunit beta (1380 aa).

This sequence belongs to the RNA polymerase beta chain family. The RNAP catalytic core consists of 2 alpha, 1 beta, 1 beta' and 1 omega subunit. When a sigma factor is associated with the core the holoenzyme is formed, which can initiate transcription.

It catalyses the reaction RNA(n) + a ribonucleoside 5'-triphosphate = RNA(n+1) + diphosphate. In terms of biological role, DNA-dependent RNA polymerase catalyzes the transcription of DNA into RNA using the four ribonucleoside triphosphates as substrates. This is DNA-directed RNA polymerase subunit beta from Nitrobacter hamburgensis (strain DSM 10229 / NCIMB 13809 / X14).